The primary structure comprises 611 residues: Calmegin (611 aa).

An N-terminal signal peptide occupies residues Met-1 to Ala-19. Topologically, residues Asp-20–Trp-471 are lumenal. At Lys-128 the chain carries N6-acetyllysine. An intrachain disulfide couples Cys-151 to Cys-185. The tract at residues Leu-254–Asp-335 is disordered. Over residues Arg-265–Ile-284 the composition is skewed to basic and acidic residues. 8 repeat units span residues Ile-267–Asp-280, Ile-284–Glu-297, Ile-303–Asp-316, Ile-322–Asp-335, Gly-339–Gln-352, Gly-356–Lys-369, Gly-370–Gln-383, and Gly-384–Phe-397. Residues Asp-317–Ala-350 are interaction with PPIB. Cys-351 and Cys-355 are oxidised to a cystine. The chain crosses the membrane as a helical span at residues Leu-472 to Trp-492. The Cytoplasmic portion of the chain corresponds to Pro-493–Asp-611. Residues Ala-517–Asp-611 form a disordered region. Positions Glu-526–Asp-584 are enriched in basic and acidic residues. 7 positions are modified to phosphoserine: Ser-561, Ser-578, Ser-580, Ser-582, Ser-592, Ser-595, and Ser-602. The segment covering Ser-602–Asp-611 has biased composition (basic residues).

Belongs to the calreticulin family. Interacts with PDILT and PPIB. Interacts with ADAM2. Interacts with ADAM1A, ADAM1B and ADAM3; these are protein-coding genes in mouse but may be pseudogenes in other organisms. In terms of tissue distribution, detected in testis (at protein level). Detected in testis.

Its subcellular location is the endoplasmic reticulum membrane. Functions during spermatogenesis as a chaperone for a range of client proteins that are important for sperm adhesion onto the egg zona pellucida and for subsequent penetration of the zona pellucida. Required for normal sperm migration from the uterus into the oviduct. Required for normal male fertility. Binds calcium ions. The sequence is that of Calmegin (Clgn) from Mus musculus (Mouse).